Consider the following 382-residue polypeptide: MNSTLFSRVENYSVHYNVSENSPFLAFENDDCHLPLAVIFTLALAYGAVIILGVSGNLALIIIILKQKEMRNVTNILIVNLSFSDLLVAVMCLPFTFVYTLMDHWVFGETMCKLNPFVQCVSITVSIFSLVLIAVERHQLIINPRGWRPNNRHAYIGITVIWVLAVASSLPFVIYQILTDEPFQNVSLAAFKDKYVCFDKFPSDSHRLSYTTLLLVLQYFGPLCFIFICYFKIYIRLKRRNNMMDKIRDSKYRSSETKRINVMLLSIVVAFAVCWLPLTIFNTVFDWNHQIIATCNHNLLFLLCHLTAMISTCVNPIFYGFLNKNFQRDLQFFFNFCDFRSRDDDYETIAMSTMHTDVSKTSLKQASPVAFKKISMNDNEKI.

Residues 1–33 lie on the Extracellular side of the membrane; sequence MNSTLFSRVENYSVHYNVSENSPFLAFENDDCH. N-linked (GlcNAc...) asparagine glycans are attached at residues Asn-2, Asn-11, and Asn-17. The chain crosses the membrane as a helical span at residues 34-54; sequence LPLAVIFTLALAYGAVIILGV. The Cytoplasmic portion of the chain corresponds to 55-75; the sequence is SGNLALIIIILKQKEMRNVTN. The helical transmembrane segment at 76–96 threads the bilayer; sequence ILIVNLSFSDLLVAVMCLPFT. Topologically, residues 97–115 are extracellular; it reads FVYTLMDHWVFGETMCKLN. The cysteines at positions 112 and 197 are disulfide-linked. Residues 116–136 form a helical membrane-spanning segment; sequence PFVQCVSITVSIFSLVLIAVE. Over 137-153 the chain is Cytoplasmic; it reads RHQLIINPRGWRPNNRH. Residues 154 to 174 traverse the membrane as a helical segment; sequence AYIGITVIWVLAVASSLPFVI. The Extracellular segment spans residues 175–210; that stretch reads YQILTDEPFQNVSLAAFKDKYVCFDKFPSDSHRLSY. Residues 211–231 form a helical membrane-spanning segment; sequence TTLLLVLQYFGPLCFIFICYF. Over 232–259 the chain is Cytoplasmic; the sequence is KIYIRLKRRNNMMDKIRDSKYRSSETKR. A helical transmembrane segment spans residues 260 to 280; that stretch reads INVMLLSIVVAFAVCWLPLTI. The Extracellular segment spans residues 281 to 298; it reads FNTVFDWNHQIIATCNHN. A helical transmembrane segment spans residues 299-319; that stretch reads LLFLLCHLTAMISTCVNPIFY. Topologically, residues 320–382 are cytoplasmic; it reads GFLNKNFQRD…KISMNDNEKI (63 aa). Residue Cys-337 is the site of S-palmitoyl cysteine attachment. Residues Ser-367 and Ser-375 each carry the phosphoserine modification.

It belongs to the G-protein coupled receptor 1 family. As to expression, brain.

Its subcellular location is the cell membrane. Receptor for neuropeptide Y and peptide YY. In Rattus norvegicus (Rat), this protein is Neuropeptide Y receptor type 1 (Npy1r).